A 610-amino-acid polypeptide reads, in one-letter code: Glutamine--fructose-6-phosphate aminotransferase [isomerizing] (610 aa).

Residue C2 is the Nucleophile; for GATase activity of the active site. The 217-residue stretch at 2–218 folds into the Glutamine amidotransferase type-2 domain; sequence CGIVGAVAQR…EGDVAEITRH (217 aa). SIS domains are found at residues 286–426 and 459–600; these read AADI…LKGR and LSED…VDQP. The active-site For Fru-6P isomerization activity is K605.

As to quaternary structure, homodimer.

It localises to the cytoplasm. The enzyme catalyses D-fructose 6-phosphate + L-glutamine = D-glucosamine 6-phosphate + L-glutamate. In terms of biological role, catalyzes the first step in hexosamine metabolism, converting fructose-6P into glucosamine-6P using glutamine as a nitrogen source. This Haemophilus ducreyi (strain 35000HP / ATCC 700724) protein is Glutamine--fructose-6-phosphate aminotransferase [isomerizing].